The following is a 368-amino-acid chain: Agmatine deiminase (368 aa).

The Amidino-cysteine intermediate role is filled by Cys357.

It belongs to the agmatine deiminase family. As to quaternary structure, homodimer.

It catalyses the reaction agmatine + H2O = N-carbamoylputrescine + NH4(+). It functions in the pathway amine and polyamine biosynthesis; putrescine biosynthesis via agmatine pathway; N-carbamoylputrescine from agmatine: step 1/1. In terms of biological role, mediates the hydrolysis of agmatine into N-carbamoylputrescine in the arginine decarboxylase (ADC) pathway of putrescine biosynthesis, a basic polyamine. The polypeptide is Agmatine deiminase (Pseudomonas savastanoi pv. phaseolicola (strain 1448A / Race 6) (Pseudomonas syringae pv. phaseolicola (strain 1448A / Race 6))).